We begin with the raw amino-acid sequence, 745 residues long: Elongation factor G, mitochondrial (745 aa).

A tr-type G domain is found at 40–317; it reads ERIRNIGISA…AVLDYLPNPG (278 aa). GTP is bound by residues 49–56, 116–120, and 170–173; these read AHIDSGKT, DTPGH, and NKLD.

Belongs to the TRAFAC class translation factor GTPase superfamily. Classic translation factor GTPase family. EF-G/EF-2 subfamily.

It is found in the mitochondrion. It participates in protein biosynthesis; polypeptide chain elongation. In terms of biological role, mitochondrial GTPase that catalyzes the GTP-dependent ribosomal translocation step during translation elongation. During this step, the ribosome changes from the pre-translocational (PRE) to the post-translocational (POST) state as the newly formed A-site-bound peptidyl-tRNA and P-site-bound deacylated tRNA move to the P and E sites, respectively. Catalyzes the coordinated movement of the two tRNA molecules, the mRNA and conformational changes in the ribosome. Essential during development as it acts as a retrograde signal from mitochondria to the nucleus to slow down cell proliferation if mitochondrial energy output is low. In Drosophila yakuba (Fruit fly), this protein is Elongation factor G, mitochondrial.